A 460-amino-acid polypeptide reads, in one-letter code: Light-independent protochlorophyllide reductase subunit N (460 aa).

[4Fe-4S] cluster is bound by residues C22, C47, and C107.

The protein belongs to the BchN/ChlN family. Protochlorophyllide reductase is composed of three subunits; ChlL, ChlN and ChlB. Forms a heterotetramer of two ChlB and two ChlN subunits. [4Fe-4S] cluster serves as cofactor.

It is found in the plastid. Its subcellular location is the cyanelle. The catalysed reaction is chlorophyllide a + oxidized 2[4Fe-4S]-[ferredoxin] + 2 ADP + 2 phosphate = protochlorophyllide a + reduced 2[4Fe-4S]-[ferredoxin] + 2 ATP + 2 H2O. The protein operates within porphyrin-containing compound metabolism; chlorophyll biosynthesis (light-independent). Its function is as follows. Component of the dark-operative protochlorophyllide reductase (DPOR) that uses Mg-ATP and reduced ferredoxin to reduce ring D of protochlorophyllide (Pchlide) to form chlorophyllide a (Chlide). This reaction is light-independent. The NB-protein (ChlN-ChlB) is the catalytic component of the complex. This chain is Light-independent protochlorophyllide reductase subunit N, found in Cyanophora paradoxa.